Here is a 101-residue protein sequence, read N- to C-terminus: Cilia- and flagella-associated protein 141 (101 aa).

As to quaternary structure, microtubule inner protein component of sperm flagellar doublet microtubules. As to expression, expressed in airway epithelial cells.

The protein localises to the cytoplasm. The protein resides in the cytoskeleton. It localises to the cilium axoneme. It is found in the flagellum axoneme. Functionally, microtubule inner protein (MIP) part of the dynein-decorated doublet microtubules (DMTs) in cilia axoneme, which is required for motile cilia beating. This Homo sapiens (Human) protein is Cilia- and flagella-associated protein 141.